A 179-amino-acid chain; its full sequence is Large ribosomal subunit protein uL5 (179 aa).

Belongs to the universal ribosomal protein uL5 family. Part of the 50S ribosomal subunit; part of the 5S rRNA/L5/L18/L25 subcomplex. Contacts the 5S rRNA and the P site tRNA. Forms a bridge to the 30S subunit in the 70S ribosome.

In terms of biological role, this is one of the proteins that bind and probably mediate the attachment of the 5S RNA into the large ribosomal subunit, where it forms part of the central protuberance. In the 70S ribosome it contacts protein S13 of the 30S subunit (bridge B1b), connecting the 2 subunits; this bridge is implicated in subunit movement. Contacts the P site tRNA; the 5S rRNA and some of its associated proteins might help stabilize positioning of ribosome-bound tRNAs. The sequence is that of Large ribosomal subunit protein uL5 from Lawsonia intracellularis (strain PHE/MN1-00).